Consider the following 65-residue polypeptide: Sodium channel neurotoxin MeuNaTxalpha-9 (65 aa).

Residues 2 to 64 (RDGYIANDRN…VPIRIPGECR (63 aa)) enclose the LCN-type CS-alpha/beta domain. Intrachain disulfides connect Cys12/Cys63, Cys16/Cys36, Cys22/Cys46, and Cys26/Cys48. The residue at position 64 (Arg64) is an Arginine amide.

It belongs to the long (4 C-C) scorpion toxin superfamily. Sodium channel inhibitor family. Alpha subfamily. As to expression, expressed by the venom gland.

Its subcellular location is the secreted. Functionally, alpha toxins bind voltage-independently at site-3 of sodium channels (Nav) and inhibit the inactivation of the activated channels, thereby blocking neuronal transmission. The protein is Sodium channel neurotoxin MeuNaTxalpha-9 of Mesobuthus eupeus (Lesser Asian scorpion).